A 310-amino-acid polypeptide reads, in one-letter code: 4-hydroxythreonine-4-phosphate dehydrogenase (310 aa).

Residue Thr129 coordinates substrate. A divalent metal cation contacts are provided by His158, His202, and His250. The substrate site is built by Lys258, Asn267, and Arg276.

It belongs to the PdxA family. In terms of assembly, homodimer. It depends on a divalent metal cation as a cofactor.

Its subcellular location is the cytoplasm. It carries out the reaction 4-(phosphooxy)-L-threonine + NAD(+) = 3-amino-2-oxopropyl phosphate + CO2 + NADH. The protein operates within cofactor biosynthesis; pyridoxine 5'-phosphate biosynthesis; pyridoxine 5'-phosphate from D-erythrose 4-phosphate: step 4/5. Catalyzes the NAD(P)-dependent oxidation of 4-(phosphooxy)-L-threonine (HTP) into 2-amino-3-oxo-4-(phosphooxy)butyric acid which spontaneously decarboxylates to form 3-amino-2-oxopropyl phosphate (AHAP). In Hydrogenobaculum sp. (strain Y04AAS1), this protein is 4-hydroxythreonine-4-phosphate dehydrogenase.